We begin with the raw amino-acid sequence, 256 residues long: Gluconate 5-dehydrogenase (256 aa).

15 to 39 (LVTGASRGIGLTLAKGLARYGAEVV) is an NADP(+) binding site. Residue serine 147 participates in substrate binding. Tyrosine 160 functions as the Proton acceptor in the catalytic mechanism.

This sequence belongs to the short-chain dehydrogenases/reductases (SDR) family. Homodimer.

The protein resides in the cytoplasm. It catalyses the reaction D-gluconate + NADP(+) = 5-dehydro-D-gluconate + NADPH + H(+). Functionally, catalyzes the reversible NADP-dependent oxidation of gluconate to 5-ketogluconate. Is involved in the non-phosphorylative, ketogenic oxidation of glucose. Is almost inactive with NAD as cosubstrate. Displays high substrate specificity since D-Glucose, D-sorbitol, and D-mannitol are not oxidized by the enzyme, and 2-ketogluconate and L-sorbose are not reduced. Can accept D-fructose as a substrate, with a rate that is only 10% of the rate of 5-ketogluconate reduction. The chain is Gluconate 5-dehydrogenase from Gluconobacter oxydans (strain 621H) (Gluconobacter suboxydans).